Consider the following 255-residue polypeptide: Phosphate import ATP-binding protein PstB (255 aa).

Residues 10 to 250 (INIKDLNLWY…PQMKSTEDYI (241 aa)) form the ABC transporter domain. Residue 42–49 (GPSGCGKS) participates in ATP binding.

It belongs to the ABC transporter superfamily. Phosphate importer (TC 3.A.1.7) family. As to quaternary structure, the complex is composed of two ATP-binding proteins (PstB), two transmembrane proteins (PstC and PstA) and a solute-binding protein (PstS).

The protein localises to the cell membrane. The enzyme catalyses phosphate(out) + ATP + H2O = ADP + 2 phosphate(in) + H(+). Functionally, part of the ABC transporter complex PstSACB involved in phosphate import. Responsible for energy coupling to the transport system. The protein is Phosphate import ATP-binding protein PstB of Methanococcoides burtonii (strain DSM 6242 / NBRC 107633 / OCM 468 / ACE-M).